The primary structure comprises 1132 residues: Eisosome protein SEG2 (1132 aa).

Positions 76–95 (KRTSSLPNQGHKNTSNNSAG) are enriched in polar residues. Disordered regions lie at residues 76–142 (KRTS…GNSG) and 171–225 (RYSL…NDYH). Basic and acidic residues predominate over residues 101-113 (AHEDAETTFREFG). Residues 115-142 (KQSSKVLNISSSTGQNSKSRTTSLGNSG) show a composition bias toward polar residues. Ser-137 bears the Phosphoserine mark. The segment covering 208–225 (GSQEKKSESGGKSKNDYH) has biased composition (basic and acidic residues). Ser-280 carries the post-translational modification Phosphoserine. The interval 404–429 (PTLSEPKPAYVPPEDVEKEPSTLSNQ) is disordered. Residues Ser-504 and Ser-507 each carry the phosphoserine modification. Disordered stretches follow at residues 510–938 (GGNQ…FRSM) and 961–993 (EKKE…THTT). Lys-526 is covalently cross-linked (Glycyl lysine isopeptide (Lys-Gly) (interchain with G-Cter in ubiquitin)). Composition is skewed to acidic residues over residues 550 to 561 (DQEEALSDNEPE) and 595 to 644 (KDDD…DDEY). Residue Ser-556 is modified to Phosphoserine. Composition is skewed to polar residues over residues 688 to 699 (SENAEVSQSGTN) and 710 to 735 (YLTN…TDTT). Residue Lys-743 forms a Glycyl lysine isopeptide (Lys-Gly) (interchain with G-Cter in ubiquitin) linkage. The segment covering 761-773 (SSTSSSIYSIETS) has biased composition (low complexity). Composition is skewed to polar residues over residues 774 to 810 (PNID…SSHQ) and 827 to 845 (NRSC…TLSH). Positions 850–860 (PASDSSSSPPY) are enriched in low complexity. Positions 916–930 (PPARKSSFEKERPAK) are enriched in basic and acidic residues. Ser-980 and Ser-1022 each carry phosphoserine.

Belongs to the SEG1 family. In terms of assembly, component of eisosomes, large cytoplasmic protein assemblies that localize to specialized domains termed MCCs on the plasma membrane.

It localises to the cell membrane. Its function is as follows. Likely plays only a minor role in eisosome assembly. The polypeptide is Eisosome protein SEG2 (SEG2) (Saccharomyces cerevisiae (strain ATCC 204508 / S288c) (Baker's yeast)).